The following is a 480-amino-acid chain: tRNA (guanine(37)-N(1))-methyltransferase (480 aa).

S-adenosyl-L-methionine is bound by residues H244, 292–293, 321–322, and N342; these read DL and DG.

This sequence belongs to the class I-like SAM-binding methyltransferase superfamily. TRM5/TYW2 family. In terms of assembly, monomer.

It is found in the mitochondrion matrix. The protein localises to the nucleus. It localises to the cytoplasm. The catalysed reaction is guanosine(37) in tRNA + S-adenosyl-L-methionine = N(1)-methylguanosine(37) in tRNA + S-adenosyl-L-homocysteine + H(+). Functionally, specifically methylates the N1 position of guanosine-37 in various cytoplasmic and mitochondrial tRNAs. Methylation is not dependent on the nature of the nucleoside 5' of the target nucleoside. This is the first step in the biosynthesis of wybutosine (yW), a modified base adjacent to the anticodon of tRNAs and required for accurate decoding. This Thalassiosira pseudonana (Marine diatom) protein is tRNA (guanine(37)-N(1))-methyltransferase.